The primary structure comprises 743 residues: Phosphoribosylformylglycinamidine synthase subunit PurL (743 aa).

The active site involves His-50. Positions 53 and 92 each coordinate ATP. Glu-94 serves as a coordination point for Mg(2+). Residues 95–98 and Arg-117 contribute to the substrate site; that span reads SHNH. His-96 (proton acceptor) is an active-site residue. Asp-118 serves as a coordination point for Mg(2+). A substrate-binding site is contributed by Gln-241. Mg(2+) is bound at residue Asp-269. 313 to 315 provides a ligand contact to substrate; that stretch reads ESQ. Positions 494 and 531 each coordinate ATP. Asn-532 contributes to the Mg(2+) binding site. Ser-534 is a binding site for substrate.

It belongs to the FGAMS family. In terms of assembly, monomer. Part of the FGAM synthase complex composed of 1 PurL, 1 PurQ and 2 PurS subunits.

Its subcellular location is the cytoplasm. It carries out the reaction N(2)-formyl-N(1)-(5-phospho-beta-D-ribosyl)glycinamide + L-glutamine + ATP + H2O = 2-formamido-N(1)-(5-O-phospho-beta-D-ribosyl)acetamidine + L-glutamate + ADP + phosphate + H(+). It functions in the pathway purine metabolism; IMP biosynthesis via de novo pathway; 5-amino-1-(5-phospho-D-ribosyl)imidazole from N(2)-formyl-N(1)-(5-phospho-D-ribosyl)glycinamide: step 1/2. Its function is as follows. Part of the phosphoribosylformylglycinamidine synthase complex involved in the purines biosynthetic pathway. Catalyzes the ATP-dependent conversion of formylglycinamide ribonucleotide (FGAR) and glutamine to yield formylglycinamidine ribonucleotide (FGAM) and glutamate. The FGAM synthase complex is composed of three subunits. PurQ produces an ammonia molecule by converting glutamine to glutamate. PurL transfers the ammonia molecule to FGAR to form FGAM in an ATP-dependent manner. PurS interacts with PurQ and PurL and is thought to assist in the transfer of the ammonia molecule from PurQ to PurL. The sequence is that of Phosphoribosylformylglycinamidine synthase subunit PurL from Sinorhizobium medicae (strain WSM419) (Ensifer medicae).